The primary structure comprises 584 residues: 2-succinyl-5-enolpyruvyl-6-hydroxy-3-cyclohexene-1-carboxylate synthase (584 aa).

Belongs to the TPP enzyme family. MenD subfamily. As to quaternary structure, homodimer. Requires Mg(2+) as cofactor. Mn(2+) is required as a cofactor. The cofactor is thiamine diphosphate.

It carries out the reaction isochorismate + 2-oxoglutarate + H(+) = 5-enolpyruvoyl-6-hydroxy-2-succinyl-cyclohex-3-ene-1-carboxylate + CO2. It functions in the pathway quinol/quinone metabolism; 1,4-dihydroxy-2-naphthoate biosynthesis; 1,4-dihydroxy-2-naphthoate from chorismate: step 2/7. It participates in quinol/quinone metabolism; menaquinone biosynthesis. Its function is as follows. Catalyzes the thiamine diphosphate-dependent decarboxylation of 2-oxoglutarate and the subsequent addition of the resulting succinic semialdehyde-thiamine pyrophosphate anion to isochorismate to yield 2-succinyl-5-enolpyruvyl-6-hydroxy-3-cyclohexene-1-carboxylate (SEPHCHC). This is 2-succinyl-5-enolpyruvyl-6-hydroxy-3-cyclohexene-1-carboxylate synthase from Bacillus cereus (strain ZK / E33L).